Consider the following 127-residue polypeptide: MSIPNNLRYSEEHEWVKTEGNAVVIGITHFAQGELGDIVFVELPEVGATIQADEPFGSVESVKTVSELYAPVSGKVVAVNEELSDQPELVNESPYEGAWMVKVELSDASQVEKLLTAEKYAEMTNQD.

The Lipoyl-binding domain occupies 22–104; sequence AVVIGITHFA…YEGAWMVKVE (83 aa). K63 is subject to N6-lipoyllysine.

Belongs to the GcvH family. As to quaternary structure, the glycine cleavage system is composed of four proteins: P, T, L and H. (R)-lipoate is required as a cofactor.

Its function is as follows. The glycine cleavage system catalyzes the degradation of glycine. The H protein shuttles the methylamine group of glycine from the P protein to the T protein. In terms of biological role, is also involved in protein lipoylation via its role as an octanoyl/lipoyl carrier protein intermediate. This chain is Glycine cleavage system H protein, found in Bacillus mycoides (strain KBAB4) (Bacillus weihenstephanensis).